Here is a 244-residue protein sequence, read N- to C-terminus: ATP synthase subunit 4, mitochondrial (244 aa).

The transit peptide at 1–35 directs the protein to the mitochondrion; sequence MSMSMGVRGLALRSVSKTLFSQGVRCPSMVIGARY. Ser144 is modified (phosphoserine).

This sequence belongs to the eukaryotic ATPase B chain family. As to quaternary structure, F-type ATPases have 2 components, CF(1) - the catalytic core - and CF(0) - the membrane proton channel. In yeast, the dimeric form of ATP synthase consists of 17 polypeptides: alpha, beta, gamma, delta, epsilon, 4 (B), 5 (OSCP), 6 (A), 8, 9 (C), d, E (Tim11), f, g, h, i/j and k.

Its subcellular location is the mitochondrion. It is found in the mitochondrion inner membrane. Its function is as follows. Mitochondrial membrane ATP synthase (F(1)F(0) ATP synthase or Complex V) produces ATP from ADP in the presence of a proton gradient across the membrane which is generated by electron transport complexes of the respiratory chain. F-type ATPases consist of two structural domains, F(1) - containing the extramembraneous catalytic core, and F(0) - containing the membrane proton channel, linked together by a central stalk and a peripheral stalk. During catalysis, ATP synthesis in the catalytic domain of F(1) is coupled via a rotary mechanism of the central stalk subunits to proton translocation. Part of the complex F(0) domain and the peripheric stalk, which acts as a stator to hold the catalytic alpha(3)beta(3) subcomplex and subunit a/ATP6 static relative to the rotary elements. This is ATP synthase subunit 4, mitochondrial (ATP4) from Saccharomyces cerevisiae (strain ATCC 204508 / S288c) (Baker's yeast).